Reading from the N-terminus, the 205-residue chain is tRNA 2-(methylsulfanyl)-N(6)-isopentenyladenosine(37) hydroxylase (205 aa).

Residues Glu-38, Glu-69, His-72, Glu-122, Glu-151, and His-154 each contribute to the Fe cation site.

Belongs to the MiaE family. Homodimer. Requires Fe cation as cofactor.

It carries out the reaction 2-methylsulfanyl-N(6)-dimethylallyladenosine(37) in tRNA + AH2 + O2 = N(6)-[(2E)-4-hydroxy-3-methylbut-2-en-1-yl]-2-(methylsulfanyl)adenosine(37) in tRNA + A + H2O. Its pathway is tRNA modification; 2-methylthio-N-6-(cis-hydroxy)isopentenyl adenosine-tRNA biosynthesis. Its function is as follows. Involved in specific tRNA modification. Catalyzes the oxygen-dependent hydroxylation of 2-methylthio-N-6-isopentenyl adenosine (ms2i6A) to produce 2-methylthio-N-6-(cis-hydroxy)isopentenyl adenosine (ms2io6A) at position 37 in tRNAs. The sequence is that of tRNA 2-(methylsulfanyl)-N(6)-isopentenyladenosine(37) hydroxylase from Pseudomonas putida (strain ATCC 47054 / DSM 6125 / CFBP 8728 / NCIMB 11950 / KT2440).